Reading from the N-terminus, the 156-residue chain is Ribonuclease pancreatic (156 aa).

Positions Met1 to Gly28 are cleaved as a signal peptide. 2 residues coordinate substrate: Lys35 and Arg38. The active-site Proton acceptor is His40. N-linked (GlcNAc...) asparagine glycans are attached at residues Asn50 and Asn62. Disulfide bonds link Cys54-Cys112, Cys68-Cys123, Cys86-Cys138, and Cys93-Cys100. Residues Lys69–Thr73 and Lys94 each bind substrate. Asn104 carries an N-linked (GlcNAc...) asparagine glycan. Arg113 is a binding site for substrate. N-linked (GlcNAc...) asparagine glycosylation is present at Asn116. The active-site Proton donor is the His147.

This sequence belongs to the pancreatic ribonuclease family. As to quaternary structure, monomer. Interacts with and forms tight 1:1 complexes with RNH1. Dimerization of two such complexes may occur. Interaction with RNH1 inhibits this protein.

It localises to the secreted. It carries out the reaction an [RNA] containing cytidine + H2O = an [RNA]-3'-cytidine-3'-phosphate + a 5'-hydroxy-ribonucleotide-3'-[RNA].. It catalyses the reaction an [RNA] containing uridine + H2O = an [RNA]-3'-uridine-3'-phosphate + a 5'-hydroxy-ribonucleotide-3'-[RNA].. Endonuclease that catalyzes the cleavage of RNA on the 3' side of pyrimidine nucleotides. Acts on single-stranded and double-stranded RNA. This chain is Ribonuclease pancreatic (RNASE1), found in Nomascus leucogenys (Northern white-cheeked gibbon).